Reading from the N-terminus, the 369-residue chain is Methylthioribose-1-phosphate isomerase (369 aa).

Substrate is bound by residues 54–56 (RGA), Arg95, and Gln208. The Proton donor role is filled by Asp249. 259–260 (NK) lines the substrate pocket.

This sequence belongs to the eIF-2B alpha/beta/delta subunits family. MtnA subfamily.

The catalysed reaction is 5-(methylsulfanyl)-alpha-D-ribose 1-phosphate = 5-(methylsulfanyl)-D-ribulose 1-phosphate. It participates in amino-acid biosynthesis; L-methionine biosynthesis via salvage pathway; L-methionine from S-methyl-5-thio-alpha-D-ribose 1-phosphate: step 1/6. Functionally, catalyzes the interconversion of methylthioribose-1-phosphate (MTR-1-P) into methylthioribulose-1-phosphate (MTRu-1-P). The polypeptide is Methylthioribose-1-phosphate isomerase (Desulfatibacillum aliphaticivorans).